We begin with the raw amino-acid sequence, 111 residues long: UPF0122 protein LACR_1522 (111 aa).

The protein belongs to the UPF0122 family.

Its function is as follows. Might take part in the signal recognition particle (SRP) pathway. This is inferred from the conservation of its genetic proximity to ftsY/ffh. May be a regulatory protein. This Lactococcus lactis subsp. cremoris (strain SK11) protein is UPF0122 protein LACR_1522.